Consider the following 348-residue polypeptide: Endoglucanase-6B (348 aa).

The substrate site is built by W52 and S54. Residues D92 and D139 each act as proton donor in the active site. The substrate site is built by N183, W186, N222, W282, K310, and E314. The segment covering N222–P241 has biased composition (low complexity). The disordered stretch occupies residues N222–S244.

Belongs to the glycosyl hydrolase 6 (cellulase B) family. As to quaternary structure, monomer.

The catalysed reaction is Endohydrolysis of (1-&gt;4)-beta-D-glucosidic linkages in cellulose, lichenin and cereal beta-D-glucans.. Plays a central role in the recycling of plant biomass. The biological conversion of cellulose to glucose generally requires three types of hydrolytic enzymes: (1) Endoglucanases which cut internal beta-1,4-glucosidic bonds; (2) Exocellobiohydrolases that cut the disaccharide cellobiose from the non-reducing end of the cellulose polymer chain; (3) Beta-1,4-glucosidases which hydrolyze the cellobiose and other short cello-oligosaccharides to glucose. In Humicola insolens (Soft-rot fungus), this protein is Endoglucanase-6B.